The sequence spans 210 residues: Uracil phosphoribosyltransferase (210 aa).

Residues arginine 78, arginine 103, and 130-138 (DPMLATGGT) each bind 5-phospho-alpha-D-ribose 1-diphosphate. Uracil is bound by residues isoleucine 193 and 198–200 (GDA). 5-phospho-alpha-D-ribose 1-diphosphate is bound at residue aspartate 199.

Belongs to the UPRTase family. It depends on Mg(2+) as a cofactor.

It catalyses the reaction UMP + diphosphate = 5-phospho-alpha-D-ribose 1-diphosphate + uracil. Its pathway is pyrimidine metabolism; UMP biosynthesis via salvage pathway; UMP from uracil: step 1/1. With respect to regulation, allosterically activated by GTP. Catalyzes the conversion of uracil and 5-phospho-alpha-D-ribose 1-diphosphate (PRPP) to UMP and diphosphate. This is Uracil phosphoribosyltransferase from Stenotrophomonas maltophilia (strain R551-3).